We begin with the raw amino-acid sequence, 376 residues long: Eugenol O-methyltransferase (376 aa).

4 residues coordinate S-adenosyl-L-methionine: Gly219, Asp242, Met263, and Lys276. His280 acts as the Proton acceptor in catalysis.

It belongs to the class I-like SAM-binding methyltransferase superfamily. Cation-independent O-methyltransferase family. COMT subfamily. In terms of assembly, homodimer. As to expression, expressed predominantly in root hairs.

It carries out the reaction (E)-isoeugenol + S-adenosyl-L-methionine = (E)-isomethyleugenol + S-adenosyl-L-homocysteine + H(+). Its function is as follows. O-methyltransferase. Substrate preference is eugenol &gt;&gt; orcinol monomethyl ether &gt; resorcinol monomethyl ether. This is Eugenol O-methyltransferase (EOMT) from Sorghum bicolor (Sorghum).